A 190-amino-acid polypeptide reads, in one-letter code: Potassium-transporting ATPase KdpC subunit (190 aa).

Residues 10-30 traverse the membrane as a helical segment; it reads TFIFLLLITGGVYPLLTTVLG.

Belongs to the KdpC family. In terms of assembly, the system is composed of three essential subunits: KdpA, KdpB and KdpC.

The protein localises to the cell inner membrane. In terms of biological role, part of the high-affinity ATP-driven potassium transport (or Kdp) system, which catalyzes the hydrolysis of ATP coupled with the electrogenic transport of potassium into the cytoplasm. This subunit acts as a catalytic chaperone that increases the ATP-binding affinity of the ATP-hydrolyzing subunit KdpB by the formation of a transient KdpB/KdpC/ATP ternary complex. In Escherichia coli (strain 55989 / EAEC), this protein is Potassium-transporting ATPase KdpC subunit.